The sequence spans 111 residues: Auxin-repressed 12.5 kDa protein (111 aa).

The disordered stretch occupies residues 18–111 (ERGLGMLRKV…SGETRSKHHR (94 aa)). Residues 43–57 (TMPTTPTTPVTPTTP) show a composition bias toward low complexity. Over residues 74–95 (SNLSSKTMGNQVFDSPQPNSPT) the composition is skewed to polar residues.

The protein belongs to the DRM1/ARP family.

The sequence is that of Auxin-repressed 12.5 kDa protein from Fragaria ananassa (Strawberry).